The following is a 550-amino-acid chain: Dihydroxy-acid dehydratase (550 aa).

A Mg(2+)-binding site is contributed by Asp78. Cys119 contributes to the [2Fe-2S] cluster binding site. Residues Asp120 and Lys121 each coordinate Mg(2+). At Lys121 the chain carries N6-carboxylysine. A [2Fe-2S] cluster-binding site is contributed by Cys191. Glu440 is a Mg(2+) binding site. The active-site Proton acceptor is the Ser466.

The protein belongs to the IlvD/Edd family. Homodimer. Requires [2Fe-2S] cluster as cofactor. The cofactor is Mg(2+).

It catalyses the reaction (2R)-2,3-dihydroxy-3-methylbutanoate = 3-methyl-2-oxobutanoate + H2O. It carries out the reaction (2R,3R)-2,3-dihydroxy-3-methylpentanoate = (S)-3-methyl-2-oxopentanoate + H2O. The protein operates within amino-acid biosynthesis; L-isoleucine biosynthesis; L-isoleucine from 2-oxobutanoate: step 3/4. It participates in amino-acid biosynthesis; L-valine biosynthesis; L-valine from pyruvate: step 3/4. Functions in the biosynthesis of branched-chain amino acids. Catalyzes the dehydration of (2R,3R)-2,3-dihydroxy-3-methylpentanoate (2,3-dihydroxy-3-methylvalerate) into 2-oxo-3-methylpentanoate (2-oxo-3-methylvalerate) and of (2R)-2,3-dihydroxy-3-methylbutanoate (2,3-dihydroxyisovalerate) into 2-oxo-3-methylbutanoate (2-oxoisovalerate), the penultimate precursor to L-isoleucine and L-valine, respectively. This Methanococcus vannielii (strain ATCC 35089 / DSM 1224 / JCM 13029 / OCM 148 / SB) protein is Dihydroxy-acid dehydratase.